Consider the following 138-residue polypeptide: Beta-lactamase HcpB (138 aa).

3 TPR repeats span residues 1-28, 57-94, and 97-130; these read MVGGGTVKKDLKKAIQYYVKACELNEMF, GNGCRFLGDFYENGKYVKKDLRKAAQYYSKACGLNDQD, and LILGYKQYAGKGVVKNEKQAVKTFEKACRLGSED. Intrachain disulfides connect Cys22–Cys30, Cys52–Cys60, Cys88–Cys96, and Cys124–Cys132.

This sequence belongs to the hcp beta-lactamase family.

It carries out the reaction a beta-lactam + H2O = a substituted beta-amino acid. In terms of biological role, hydrolyzes 6-aminopenicillinic acid and 7-aminocephalosporanic acid (ACA) derivatives. The chain is Beta-lactamase HcpB (hcpB) from Helicobacter pylori (strain ATCC 700392 / 26695) (Campylobacter pylori).